The following is a 210-amino-acid chain: Dephospho-CoA kinase (210 aa).

Positions 15–210 constitute a DPCK domain; it reads VLGLTGGIGC…HKGYLKLALK (196 aa). Residue 23–28 participates in ATP binding; sequence GCGKTA.

This sequence belongs to the CoaE family.

It is found in the cytoplasm. It carries out the reaction 3'-dephospho-CoA + ATP = ADP + CoA + H(+). The protein operates within cofactor biosynthesis; coenzyme A biosynthesis; CoA from (R)-pantothenate: step 5/5. Catalyzes the phosphorylation of the 3'-hydroxyl group of dephosphocoenzyme A to form coenzyme A. The polypeptide is Dephospho-CoA kinase (Pseudoalteromonas translucida (strain TAC 125)).